The chain runs to 636 residues: 1-deoxy-D-xylulose-5-phosphate synthase (636 aa).

Residues H74 and 115–117 (GHS) each bind thiamine diphosphate. D146 contacts Mg(2+). Thiamine diphosphate-binding positions include 147–148 (GA), N175, Y286, and E367. N175 is a binding site for Mg(2+).

Belongs to the transketolase family. DXPS subfamily. Homodimer. It depends on Mg(2+) as a cofactor. Thiamine diphosphate serves as cofactor.

The catalysed reaction is D-glyceraldehyde 3-phosphate + pyruvate + H(+) = 1-deoxy-D-xylulose 5-phosphate + CO2. The protein operates within metabolic intermediate biosynthesis; 1-deoxy-D-xylulose 5-phosphate biosynthesis; 1-deoxy-D-xylulose 5-phosphate from D-glyceraldehyde 3-phosphate and pyruvate: step 1/1. Its function is as follows. Catalyzes the acyloin condensation reaction between C atoms 2 and 3 of pyruvate and glyceraldehyde 3-phosphate to yield 1-deoxy-D-xylulose-5-phosphate (DXP). The sequence is that of 1-deoxy-D-xylulose-5-phosphate synthase from Halothermothrix orenii (strain H 168 / OCM 544 / DSM 9562).